The sequence spans 200 residues: 3-isopropylmalate dehydratase small subunit (200 aa).

The protein belongs to the LeuD family. LeuD type 1 subfamily. As to quaternary structure, heterodimer of LeuC and LeuD.

The enzyme catalyses (2R,3S)-3-isopropylmalate = (2S)-2-isopropylmalate. The protein operates within amino-acid biosynthesis; L-leucine biosynthesis; L-leucine from 3-methyl-2-oxobutanoate: step 2/4. Its function is as follows. Catalyzes the isomerization between 2-isopropylmalate and 3-isopropylmalate, via the formation of 2-isopropylmaleate. In Sodalis glossinidius (strain morsitans), this protein is 3-isopropylmalate dehydratase small subunit.